Consider the following 366-residue polypeptide: MDPWDTYNIPLDHQHRLRNRRDHRHPSFSSTLLDQIYRSIDDSSTNSSSMRKTKHQNREDTRVSANRRDDFNRSKNLKTIEPVFFKHSSSSSSDSSGFSSSESDYFYRRSKSSPAISHPKPIRTTVERFERSPQNHRPNSSNKQEHGSFLKTKSKALKIYSDLKKVKQPISPGGRLATFLNSIFTGAGNTKKLNKINTTVTSTTAAAAAASSTTTCSSASSFSRSCLSKTPSSSEKSKRSVRFCPVNVIFDEDSSKYNNKNNKVYGNNEREYESIRHTLENRVMEENRRVIEAAKELLRSYQKKNKEVIEVSVEDDEEDDDDDALSCTSSDLFELDNLSAIGIDRYREELPVYETTRLNTNRIISR.

Disordered regions lie at residues 42–73 (DSSTNSSSMRKTKHQNREDTRVSANRRDDFNR) and 129–148 (FERSPQNHRPNSSNKQEHGS). A compositionally biased stretch (basic and acidic residues) spans 56 to 73 (QNREDTRVSANRRDDFNR).

This sequence belongs to the BIG GRAIN 1 (BG1) plant protein family.

It is found in the cell membrane. Its function is as follows. Involved in auxin transport. Regulator of the auxin signaling pathway. This chain is Protein BIG GRAIN 1-like B, found in Arabidopsis thaliana (Mouse-ear cress).